Here is an 85-residue protein sequence, read N- to C-terminus: Beta-toxin BmKAs1 (85 aa).

A signal peptide spans 1-19 (MKIIIFLIVCSFVLIGVKA). Residues 20 to 82 (DNGYLLNKYT…LWAYETNKCN (63 aa)) form the LCN-type CS-alpha/beta domain. Disulfide bonds link Cys-31–Cys-81, Cys-35–Cys-56, Cys-42–Cys-63, and Cys-46–Cys-65.

The protein belongs to the long (4 C-C) scorpion toxin superfamily. Sodium channel inhibitor family. Post-translationally, a possible sulfoxide Met-85 on BmP09 could explain the difference of function between BmK AS-1 and BmP09. As to expression, expressed by the venom gland.

Its subcellular location is the secreted. Functionally, beta toxins bind voltage-independently at site-4 of sodium channels (Nav) and shift the voltage of activation toward more negative potentials thereby affecting sodium channel activation and promoting spontaneous and repetitive firing. BmKAs1 also significantly stimulates the binding of [3H]-ryanodine to ryanodine receptors on the sarcoplasmic reticulum of the skeletal muscle. It also displays antinociceptive effect in rat models. In terms of biological role, toxin BmP09 (which may be post-translationally modified) specifically and reversibly blocks large conductance calcium-dependent and voltage-dependent potassium channels (BK) but has no effect on sodium channels. The chain is Beta-toxin BmKAs1 from Olivierus martensii (Manchurian scorpion).